The sequence spans 283 residues: Probable endonuclease 4 (283 aa).

Residues H67, H107, E144, D178, H181, H215, D228, H230, and E260 each coordinate Zn(2+).

This sequence belongs to the AP endonuclease 2 family. It depends on Zn(2+) as a cofactor.

It carries out the reaction Endonucleolytic cleavage to 5'-phosphooligonucleotide end-products.. Endonuclease IV plays a role in DNA repair. It cleaves phosphodiester bonds at apurinic or apyrimidinic (AP) sites, generating a 3'-hydroxyl group and a 5'-terminal sugar phosphate. This Geobacter sp. (strain M21) protein is Probable endonuclease 4.